A 343-amino-acid polypeptide reads, in one-letter code: S-adenosylmethionine:tRNA ribosyltransferase-isomerase (343 aa).

Belongs to the QueA family. As to quaternary structure, monomer.

The protein localises to the cytoplasm. It catalyses the reaction 7-aminomethyl-7-carbaguanosine(34) in tRNA + S-adenosyl-L-methionine = epoxyqueuosine(34) in tRNA + adenine + L-methionine + 2 H(+). Its pathway is tRNA modification; tRNA-queuosine biosynthesis. Functionally, transfers and isomerizes the ribose moiety from AdoMet to the 7-aminomethyl group of 7-deazaguanine (preQ1-tRNA) to give epoxyqueuosine (oQ-tRNA). In Geobacter metallireducens (strain ATCC 53774 / DSM 7210 / GS-15), this protein is S-adenosylmethionine:tRNA ribosyltransferase-isomerase.